The primary structure comprises 152 residues: Aspartate carbamoyltransferase regulatory chain (152 aa).

The Zn(2+) site is built by Cys-108, Cys-113, Cys-136, and Cys-139.

It belongs to the PyrI family. Contains catalytic and regulatory chains. Zn(2+) is required as a cofactor.

Its function is as follows. Involved in allosteric regulation of aspartate carbamoyltransferase. The chain is Aspartate carbamoyltransferase regulatory chain from Pyrococcus furiosus (strain ATCC 43587 / DSM 3638 / JCM 8422 / Vc1).